The following is a 371-amino-acid chain: Chaperone protein DnaJ (371 aa).

The J domain occupies 5-69 (DYYEILGIAK…QKRAAYDQHG (65 aa)). The CR-type zinc finger occupies 127 to 205 (GASKEIHITT…CRGQGKVEEP (79 aa)). 8 residues coordinate Zn(2+): cysteine 140, cysteine 143, cysteine 157, cysteine 160, cysteine 179, cysteine 182, cysteine 193, and cysteine 196. CXXCXGXG motif repeat units follow at residues 140–147 (CEHCKGSG), 157–164 (CTTCRGVG), 179–186 (CPRCHGQG), and 193–200 (CRQCRGQG).

This sequence belongs to the DnaJ family. In terms of assembly, homodimer. Zn(2+) serves as cofactor.

It is found in the cytoplasm. In terms of biological role, participates actively in the response to hyperosmotic and heat shock by preventing the aggregation of stress-denatured proteins and by disaggregating proteins, also in an autonomous, DnaK-independent fashion. Unfolded proteins bind initially to DnaJ; upon interaction with the DnaJ-bound protein, DnaK hydrolyzes its bound ATP, resulting in the formation of a stable complex. GrpE releases ADP from DnaK; ATP binding to DnaK triggers the release of the substrate protein, thus completing the reaction cycle. Several rounds of ATP-dependent interactions between DnaJ, DnaK and GrpE are required for fully efficient folding. Also involved, together with DnaK and GrpE, in the DNA replication of plasmids through activation of initiation proteins. The protein is Chaperone protein DnaJ of Hamiltonella defensa subsp. Acyrthosiphon pisum (strain 5AT).